A 497-amino-acid chain; its full sequence is GDP-fucose protein O-fucosyltransferase 4 (497 aa).

At 1 to 6 (MACRRR) the chain is on the cytoplasmic side. A helical; Signal-anchor for type II membrane protein membrane pass occupies residues 7–27 (LLPCAGLGLFGVLCWVWVSFA). Topologically, residues 28-497 (SFPDDQLPLE…ITERRARGKH (470 aa)) are lumenal. N169 carries N-linked (GlcNAc...) asparagine glycosylation. A disulfide bond links C392 and C395. Positions 406–427 (RAHRKDPERNPPPLPKMASNSH) are disordered. N474 is a glycosylation site (N-linked (GlcNAc...) asparagine).

The protein belongs to the glycosyltransferase 10 family.

It is found in the endoplasmic reticulum membrane. It catalyses the reaction L-threonyl-[protein] + GDP-beta-L-fucose = 3-O-(alpha-L-fucosyl)-L-threonyl-[protein] + GDP + H(+). The enzyme catalyses L-seryl-[protein] + GDP-beta-L-fucose = 3-O-(alpha-L-fucosyl)-L-seryl-[protein] + GDP + H(+). The protein operates within protein modification; protein glycosylation. Its function is as follows. Protein O-fucosyltransferase that specifically catalyzes O-fucosylation of serine or threonine residues in EMI domains of target proteins. Attaches fucose through an O-glycosidic linkage. O-fucosylation of EMI domain-containing proteins may be required for facilitating protein folding and secretion. This Oryzias latipes (Japanese rice fish) protein is GDP-fucose protein O-fucosyltransferase 4 (fut11).